Reading from the N-terminus, the 83-residue chain is NAD(P)H-quinone oxidoreductase subunit L (83 aa).

The next 2 helical transmembrane spans lie at 15–35 and 53–73; these read LFVL…VPLA and LGVY…APFI.

Belongs to the complex I NdhL subunit family. NDH-1 can be composed of about 15 different subunits; different subcomplexes with different compositions have been identified which probably have different functions.

The protein localises to the cellular thylakoid membrane. It catalyses the reaction a plastoquinone + NADH + (n+1) H(+)(in) = a plastoquinol + NAD(+) + n H(+)(out). It carries out the reaction a plastoquinone + NADPH + (n+1) H(+)(in) = a plastoquinol + NADP(+) + n H(+)(out). NDH-1 shuttles electrons from an unknown electron donor, via FMN and iron-sulfur (Fe-S) centers, to quinones in the respiratory and/or the photosynthetic chain. The immediate electron acceptor for the enzyme in this species is believed to be plastoquinone. Couples the redox reaction to proton translocation, and thus conserves the redox energy in a proton gradient. Cyanobacterial NDH-1 also plays a role in inorganic carbon-concentration. The polypeptide is NAD(P)H-quinone oxidoreductase subunit L (Synechococcus sp. (strain CC9902)).